The sequence spans 527 residues: Putative ribose/galactose/methyl galactoside import ATP-binding protein 2 (527 aa).

The interval 1–31 (MFTARVARPMAGDDAPAASSGSTGSSAPPAS) is disordered. Low complexity predominate over residues 12-31 (GDDAPAASSGSTGSSAPPAS). ABC transporter domains are found at residues 38-274 (LEVR…VGRE) and 284-523 (VPIG…RIMD). 70–77 (GENGAGKS) serves as a coordination point for ATP.

The protein belongs to the ABC transporter superfamily. Carbohydrate importer 2 (CUT2) (TC 3.A.1.2) family.

It localises to the cell inner membrane. The catalysed reaction is D-ribose(out) + ATP + H2O = D-ribose(in) + ADP + phosphate + H(+). It catalyses the reaction D-galactose(out) + ATP + H2O = D-galactose(in) + ADP + phosphate + H(+). Part of an ABC transporter complex involved in carbohydrate import. Could be involved in ribose, galactose and/or methyl galactoside import. Responsible for energy coupling to the transport system. The polypeptide is Putative ribose/galactose/methyl galactoside import ATP-binding protein 2 (Burkholderia lata (strain ATCC 17760 / DSM 23089 / LMG 22485 / NCIMB 9086 / R18194 / 383)).